Reading from the N-terminus, the 154-residue chain is UPF0178 protein H16_B0290 (154 aa).

This sequence belongs to the UPF0178 family.

In Cupriavidus necator (strain ATCC 17699 / DSM 428 / KCTC 22496 / NCIMB 10442 / H16 / Stanier 337) (Ralstonia eutropha), this protein is UPF0178 protein H16_B0290.